The chain runs to 1270 residues: DNA-directed RNA polymerase subunit beta (1270 aa).

Belongs to the RNA polymerase beta chain family. In terms of assembly, the RNAP catalytic core consists of 2 alpha, 1 beta, 1 beta' and 1 omega subunit. When a sigma factor is associated with the core the holoenzyme is formed, which can initiate transcription.

The enzyme catalyses RNA(n) + a ribonucleoside 5'-triphosphate = RNA(n+1) + diphosphate. DNA-dependent RNA polymerase catalyzes the transcription of DNA into RNA using the four ribonucleoside triphosphates as substrates. The sequence is that of DNA-directed RNA polymerase subunit beta from Bacteroides fragilis (strain ATCC 25285 / DSM 2151 / CCUG 4856 / JCM 11019 / LMG 10263 / NCTC 9343 / Onslow / VPI 2553 / EN-2).